We begin with the raw amino-acid sequence, 208 residues long: Ras-related protein RABH1b (208 aa).

16 to 23 serves as a coordination point for GTP; sequence GDQSVGKT. The short motif at 38–46 is the Effector region element; it reads YQATIGIDF. GTP contacts are provided by residues 64–68, 122–125, and 152–153; these read DTAGQ, NKTD, and SA. S-geranylgeranyl cysteine attachment occurs at residues Cys-206 and Cys-208. Cysteine methyl ester is present on Cys-208.

This sequence belongs to the small GTPase superfamily. Rab family. In terms of assembly, interacts with the C-terminus of GC5, but not with GC3. Expressed in roots, stems, leaves and flowers.

Its subcellular location is the golgi apparatus membrane. It is found in the cytoplasm. It localises to the cytosol. In terms of biological role, protein transport. Regulator of membrane traffic from the Golgi apparatus towards the endoplasmic reticulum (ER). Binds GTP and GDP and possesses intrinsic GTPase activity. This chain is Ras-related protein RABH1b (RABH1B), found in Arabidopsis thaliana (Mouse-ear cress).